Here is a 445-residue protein sequence, read N- to C-terminus: T-box transcription factor TBX20 (445 aa).

Residues 108–287 (LWDKFHELGT…SNPFAKGFRD (180 aa)) constitute a DNA-binding region (T-box). The segment at 318–337 (EEDVLGEESQTTQSRGSAFT) is disordered. Positions 325–337 (ESQTTQSRGSAFT) are enriched in polar residues.

In terms of tissue distribution, prominently expressed in the extraembryonic mesoderm, developing heart, eye analage and motor neurons of hindbrain and spinal cord. Expressed in extraembryonic tissues such as the amnion and allantois.

The protein localises to the nucleus. In terms of biological role, acts as a transcriptional activator and repressor required for cardiac development and may have key roles in the maintenance of functional and structural phenotypes in adult heart. This is T-box transcription factor TBX20 (Tbx20) from Mus musculus (Mouse).